Here is a 34-residue protein sequence, read N- to C-terminus: ECRYWLGGCSKTGDCCEHLSCSPKWHWCVWDGTF.

3 cysteine pairs are disulfide-bonded: cysteine 2–cysteine 16, cysteine 9–cysteine 21, and cysteine 15–cysteine 28.

The protein belongs to the neurotoxin 10 (Hwtx-1) family. 54 (ProTx-1) subfamily. As to expression, expressed by the venom gland.

It localises to the secreted. Its function is as follows. Ion channel impairing toxin that inhibits several voltage-gated sodium channels. It acts by inhibiting the inward component of the sodium current and by shifting the voltage dependence of channel activation to more depolarized potentials. Its most potent activity is on Nav1.7/SCN9A (IC(50)=167 nM), followed by Nav1.6/SCN8A (IC(50)=696 nM), and Nav1.2/SCN2A (IC(50)=3.54 uM). The sequence is that of Beta/mu-theraphotoxin-Pe1b from Phormingochilus everetti (Malaysian purple earth tiger tarantula).